We begin with the raw amino-acid sequence, 305 residues long: Secreted mono- and diacylglycerol lipase A (305 aa).

The first 26 residues, 1-26, serve as a signal peptide directing secretion; sequence MRLSFFTALSAVASLGYALPGKLQSR. 2 cysteine pairs are disulfide-bonded: Cys-62–Cys-67 and Cys-129–Cys-132. Ser-171 acts as the Nucleophile in catalysis. Asp-225 acts as the Charge relay system in catalysis. Asn-251 carries N-linked (GlcNAc...) asparagine glycosylation. Catalysis depends on His-285, which acts as the Charge relay system. A propeptide spans 303–305 (removed in mature form); that stretch reads KRV.

Belongs to the AB hydrolase superfamily. Lipase family. Class 3 subfamily. Multiple forms of this lipase are due to the presence of different carbohydrates, which may contribute to the stability of this lipase but not to the enzyme activity.

It localises to the secreted. The catalysed reaction is a monoacylglycerol + H2O = glycerol + a fatty acid + H(+). The enzyme catalyses a diacylglycerol + H2O = a monoacylglycerol + a fatty acid + H(+). Its activity is regulated as follows. Both Fe(3+) and Hg(2+) inhibit the activity significantly. In terms of biological role, secreted lipase strictly specific to mono- and diacylglycerol, but not triacylglycerol. Hydrolyzes long-chain monoacylglycerols most efficiently with the highest activities observed on 1- and 3- monopalmitoyl-sn-glycerol or 1-monostearoyl-rac-glycerol. Prefers to attack alpha positions to beta positions of monoacylglycerol, but shows no stereospecificity on mono- and diacylglycerol. This Penicillium camembertii protein is Secreted mono- and diacylglycerol lipase A.